Here is a 432-residue protein sequence, read N- to C-terminus: Glutamyl-tRNA reductase (432 aa).

Residues 49 to 52 (TCNR), Ser-101, 106 to 108 (EPQ), and Gln-112 each bind substrate. Cys-50 (nucleophile) is an active-site residue. Residue 181–186 (GAGETI) participates in NADP(+) binding. A disordered region spans residues 407–432 (FPEKPGYQHPPIATPIVRTDDADPAP).

It belongs to the glutamyl-tRNA reductase family. Homodimer.

The enzyme catalyses (S)-4-amino-5-oxopentanoate + tRNA(Glu) + NADP(+) = L-glutamyl-tRNA(Glu) + NADPH + H(+). It functions in the pathway porphyrin-containing compound metabolism; protoporphyrin-IX biosynthesis; 5-aminolevulinate from L-glutamyl-tRNA(Glu): step 1/2. In terms of biological role, catalyzes the NADPH-dependent reduction of glutamyl-tRNA(Glu) to glutamate 1-semialdehyde (GSA). This Xanthomonas oryzae pv. oryzae (strain PXO99A) protein is Glutamyl-tRNA reductase.